The following is a 250-amino-acid chain: tRNA pseudouridine synthase A (250 aa).

The active-site Nucleophile is the Asp-52. Tyr-111 contacts substrate.

Belongs to the tRNA pseudouridine synthase TruA family. Homodimer.

It carries out the reaction uridine(38/39/40) in tRNA = pseudouridine(38/39/40) in tRNA. Its function is as follows. Formation of pseudouridine at positions 38, 39 and 40 in the anticodon stem and loop of transfer RNAs. The chain is tRNA pseudouridine synthase A from Methylobacterium sp. (strain 4-46).